Consider the following 252-residue polypeptide: Probable transcriptional regulatory protein Moth_1704 (252 aa).

This sequence belongs to the TACO1 family.

The protein resides in the cytoplasm. This chain is Probable transcriptional regulatory protein Moth_1704, found in Moorella thermoacetica (strain ATCC 39073 / JCM 9320).